The primary structure comprises 206 residues: Small ribosomal subunit protein uS4 (206 aa).

Residues 96 to 156 (CRLDNVVYRM…EKSKNQLRIA (61 aa)) form the S4 RNA-binding domain.

It belongs to the universal ribosomal protein uS4 family. As to quaternary structure, part of the 30S ribosomal subunit. Contacts protein S5. The interaction surface between S4 and S5 is involved in control of translational fidelity.

Functionally, one of the primary rRNA binding proteins, it binds directly to 16S rRNA where it nucleates assembly of the body of the 30S subunit. With S5 and S12 plays an important role in translational accuracy. The sequence is that of Small ribosomal subunit protein uS4 from Pseudomonas aeruginosa (strain LESB58).